Reading from the N-terminus, the 257-residue chain is Probable oxidoreductase yanE (257 aa).

It belongs to the oxidoreductase OpS7 family.

Its pathway is secondary metabolite biosynthesis; terpenoid biosynthesis. Part of the gene cluster that mediates the biosynthesis of yanuthone D, a fungal isoprenoid epoxycyclohexenone that acts as an antibiotic against fungi and bacteria. The first step of the pathway is the synthesis of 6-methylsalicylic acid (6-MSA) by the polyketide synthase yanA. 6-MSA is then converted to m-cresol by the decarboxylase yanB. The cytochrome P450 monooxygenase yanC then catalyzes the oxidation of m-cresol to toluquinol. Epoxidation of toluquinol is then performed by the short chain dehydrogenase yanD, with the help of yanE, and a further prenylation by yanG leads to 7-deacetoxyyanuthone A. The next step is the hydroxylation of C-22 of 7-deacetoxyyanuthone A by the cytochrome P450 monooxygenase yanH to yield 22-deacetylyanuthone A. O-Mevalon transferase yanI then attaches mevalon to the hydroxyl group of 22-deacetylyanuthone A to produce yanuthone E. Finally, the FAD-dependent monooxygenase yanF oxidizes the hydroxyl group at C15 of yanuthone E to form yanuthone D. Furthermore, several branching points in the pathway lead to the production of yanuthones F and G from 7-deacetoxyyanuthone A; yanuthones H and I from 22-deacetylyanuthone A; and yanuthone J from yanuthone E. YanE is also involved in the synthesis of yanuthone X1 which does not have 6-methylsalicylic acid (6-MSA) as precursor. This chain is Probable oxidoreductase yanE, found in Aspergillus niger (strain ATCC 1015 / CBS 113.46 / FGSC A1144 / LSHB Ac4 / NCTC 3858a / NRRL 328 / USDA 3528.7).